The primary structure comprises 504 residues: Maturase K (504 aa).

Belongs to the intron maturase 2 family. MatK subfamily.

The protein resides in the plastid. Its subcellular location is the chloroplast. Functionally, usually encoded in the trnK tRNA gene intron. Probably assists in splicing its own and other chloroplast group II introns. The polypeptide is Maturase K (Simmondsia chinensis (Jojoba)).